A 58-amino-acid chain; its full sequence is Light-harvesting protein B-875 alpha chain (58 aa).

Residues 1–15 (MSKFYKIWMIFDPRR) lie on the Cytoplasmic side of the membrane. A helical transmembrane segment spans residues 16–36 (VFVAQGVFLFLLAVMIHLILL). Residue His-32 coordinates a bacteriochlorophyll. Residues 37–58 (STPSYNWLEISAAKYNRVAVAE) are Periplasmic-facing.

It belongs to the antenna complex alpha subunit family. As to quaternary structure, the core complex is formed by different alpha and beta chains, binding bacteriochlorophyll molecules, and arranged most probably in tetrameric structures disposed around the reaction center. The non-pigmented gamma chains may constitute additional components.

It is found in the cell inner membrane. Its function is as follows. Antenna complexes are light-harvesting systems, which transfer the excitation energy to the reaction centers. The sequence is that of Light-harvesting protein B-875 alpha chain (pufA) from Cereibacter sphaeroides (strain ATCC 17023 / DSM 158 / JCM 6121 / CCUG 31486 / LMG 2827 / NBRC 12203 / NCIMB 8253 / ATH 2.4.1.) (Rhodobacter sphaeroides).